A 531-amino-acid polypeptide reads, in one-letter code: Pyruvate kinase (531 aa).

Residue arginine 86 coordinates substrate. K(+) contacts are provided by asparagine 88, serine 90, aspartate 121, and threonine 122. 88–91 (NFSH) contacts ATP. ATP contacts are provided by arginine 128 and lysine 211. A Mg(2+)-binding site is contributed by glutamate 277. The substrate site is built by glycine 300, aspartate 301, and threonine 333. Aspartate 301 provides a ligand contact to Mg(2+).

This sequence belongs to the pyruvate kinase family. As to quaternary structure, homotetramer. Mg(2+) is required as a cofactor. K(+) serves as cofactor.

It carries out the reaction pyruvate + ATP = phosphoenolpyruvate + ADP + H(+). It participates in carbohydrate degradation; glycolysis; pyruvate from D-glyceraldehyde 3-phosphate: step 5/5. The polypeptide is Pyruvate kinase (PYK) (Eimeria tenella (Coccidian parasite)).